Here is a 61-residue protein sequence, read N- to C-terminus: Overexpressed in colon carcinoma 1 protein homolog (61 aa).

Positions 1–13 are enriched in polar residues; that stretch reads MGCGNSTAASTTP. The segment at 1–61 is disordered; it reads MGCGNSTAAS…AGQTASTHKE (61 aa). Residues 18–34 are compositionally biased toward basic and acidic residues; sequence SAKDVQDDSSMDEEKRR. Residues 48–61 are compositionally biased toward polar residues; the sequence is TNETAGQTASTHKE.

It belongs to the OCC1 family.

This is Overexpressed in colon carcinoma 1 protein homolog (si:dkey-261e22.4) from Danio rerio (Zebrafish).